The primary structure comprises 592 residues: Polyadenylate-binding protein, cytoplasmic and nuclear (592 aa).

Residues 1–10 show a composition bias toward basic and acidic residues; sequence MSDITEKTAE. The segment at 1–43 is disordered; the sequence is MSDITEKTAEQLENLQINDDQQPAQSASAPSTSASESEASSVS. Residues 11–20 show a composition bias toward polar residues; it reads QLENLQINDD. Positions 21–43 are enriched in low complexity; it reads QQPAQSASAPSTSASESEASSVS. RRM domains are found at residues 50–128, 138–215, 231–308, and 334–411; these read ASLY…WSER, GNIF…MHVP, TNIY…RAQK, and VNLF…IAQR. The PABC domain occupies 507–586; sequence NQFPRHQQQH…ALAAYENFKK (80 aa).

This sequence belongs to the polyadenylate-binding protein type-1 family.

Its subcellular location is the cytoplasm. The protein resides in the nucleus. Functionally, binds the poly(A) tail of mRNA. Appears to be an important mediator of the multiple roles of the poly(A) tail in mRNA biogenesis, stability and translation. In the nucleus, involved in both mRNA cleavage and polyadenylation. Is also required for efficient mRNA export to the cytoplasm. Acts in concert with a poly(A)-specific nuclease (PAN) to affect poly(A) tail shortening, which may occur concomitantly with either nucleocytoplasmic mRNA transport or translational initiation. In the cytoplasm, stimulates translation initiation and regulates mRNA decay through translation termination-coupled poly(A) shortening, probably mediated by PAN. The polypeptide is Polyadenylate-binding protein, cytoplasmic and nuclear (PAB1) (Kluyveromyces lactis (strain ATCC 8585 / CBS 2359 / DSM 70799 / NBRC 1267 / NRRL Y-1140 / WM37) (Yeast)).